The chain runs to 337 residues: Anthranilate phosphoribosyltransferase (337 aa).

Residues glycine 81, 84–85 (GD), serine 89, 91–94 (NVST), 109–117 (KHGNRALSS), and alanine 121 each bind 5-phospho-alpha-D-ribose 1-diphosphate. Residue glycine 81 coordinates anthranilate. Serine 93 provides a ligand contact to Mg(2+). Position 112 (asparagine 112) interacts with anthranilate. Arginine 167 is a binding site for anthranilate. The Mg(2+) site is built by aspartate 226 and glutamate 227.

This sequence belongs to the anthranilate phosphoribosyltransferase family. In terms of assembly, homodimer. Requires Mg(2+) as cofactor.

It catalyses the reaction N-(5-phospho-beta-D-ribosyl)anthranilate + diphosphate = 5-phospho-alpha-D-ribose 1-diphosphate + anthranilate. It functions in the pathway amino-acid biosynthesis; L-tryptophan biosynthesis; L-tryptophan from chorismate: step 2/5. Its function is as follows. Catalyzes the transfer of the phosphoribosyl group of 5-phosphorylribose-1-pyrophosphate (PRPP) to anthranilate to yield N-(5'-phosphoribosyl)-anthranilate (PRA). The polypeptide is Anthranilate phosphoribosyltransferase (Nitrobacter hamburgensis (strain DSM 10229 / NCIMB 13809 / X14)).